The sequence spans 20 residues: Implantin (20 aa).

This sequence belongs to the EF-1-beta/EF-1-delta family. Post-translationally, phosphorylated. In terms of tissue distribution, uterus and embryo.

The protein localises to the cytoplasm. Its subcellular location is the nucleus. In terms of biological role, binds DNA. The protein is Implantin of Mus musculus (Mouse).